The following is a 417-amino-acid chain: Riboflavin biosynthesis protein RibBA (417 aa).

The segment at 1–204 is DHBP synthase; sequence MTRFDSIERA…IADLIAWRRK (204 aa). D-ribulose 5-phosphate is bound by residues 28–29, Asp-33, 141–145, and Glu-165; these read RE and RPGHT. Glu-29 provides a ligand contact to Mg(2+). His-144 lines the Mg(2+) pocket. Residues 205–417 are GTP cyclohydrolase II; sequence HEKHVERVAS…LDDFEAGEML (213 aa). A GTP-binding site is contributed by 259–263; it reads RVHSE. Cys-264, Cys-275, and Cys-277 together coordinate Zn(2+). GTP-binding positions include Gln-280, 303-305, and Thr-325; that span reads EGR. Residue Asp-337 is the Proton acceptor; for GTP cyclohydrolase activity of the active site. Arg-339 (nucleophile; for GTP cyclohydrolase activity) is an active-site residue. Thr-360 and Lys-365 together coordinate GTP.

This sequence in the N-terminal section; belongs to the DHBP synthase family. The protein in the C-terminal section; belongs to the GTP cyclohydrolase II family. It depends on Mg(2+) as a cofactor. The cofactor is Mn(2+). Zn(2+) serves as cofactor.

It carries out the reaction D-ribulose 5-phosphate = (2S)-2-hydroxy-3-oxobutyl phosphate + formate + H(+). It catalyses the reaction GTP + 4 H2O = 2,5-diamino-6-hydroxy-4-(5-phosphoribosylamino)-pyrimidine + formate + 2 phosphate + 3 H(+). It functions in the pathway cofactor biosynthesis; riboflavin biosynthesis; 2-hydroxy-3-oxobutyl phosphate from D-ribulose 5-phosphate: step 1/1. The protein operates within cofactor biosynthesis; riboflavin biosynthesis; 5-amino-6-(D-ribitylamino)uracil from GTP: step 1/4. Functionally, catalyzes the conversion of D-ribulose 5-phosphate to formate and 3,4-dihydroxy-2-butanone 4-phosphate. Catalyzes the conversion of GTP to 2,5-diamino-6-ribosylamino-4(3H)-pyrimidinone 5'-phosphate (DARP), formate and pyrophosphate. In Rhodococcus jostii (strain RHA1), this protein is Riboflavin biosynthesis protein RibBA.